We begin with the raw amino-acid sequence, 443 residues long: UDP-N-acetylmuramate--L-alanine ligase (443 aa).

Position 110–116 (110–116) interacts with ATP; it reads GAHGKTS.

This sequence belongs to the MurCDEF family.

The protein resides in the cytoplasm. It carries out the reaction UDP-N-acetyl-alpha-D-muramate + L-alanine + ATP = UDP-N-acetyl-alpha-D-muramoyl-L-alanine + ADP + phosphate + H(+). Its pathway is cell wall biogenesis; peptidoglycan biosynthesis. Functionally, cell wall formation. The polypeptide is UDP-N-acetylmuramate--L-alanine ligase (Streptococcus equi subsp. equi (strain 4047)).